A 350-amino-acid chain; its full sequence is GTPase Obg (350 aa).

An Obg domain is found at 1–159 (MKFLDQAKIY…RWIWLRLKLI (159 aa)). Residues 160–328 (ADVGLVGLPN…VLRLLQDRVT (169 aa)) form the OBG-type G domain. Residues 166–173 (GLPNAGKS), 191–195 (FTTLH), 213–216 (DIPG), 280–283 (NKID), and 309–311 (SGV) contribute to the GTP site. 2 residues coordinate Mg(2+): S173 and T193. The tract at residues 331–350 (REAARDAAPPQAAAGREETA) is disordered.

This sequence belongs to the TRAFAC class OBG-HflX-like GTPase superfamily. OBG GTPase family. As to quaternary structure, monomer. Mg(2+) is required as a cofactor.

The protein resides in the cytoplasm. An essential GTPase which binds GTP, GDP and possibly (p)ppGpp with moderate affinity, with high nucleotide exchange rates and a fairly low GTP hydrolysis rate. Plays a role in control of the cell cycle, stress response, ribosome biogenesis and in those bacteria that undergo differentiation, in morphogenesis control. The sequence is that of GTPase Obg from Gluconacetobacter diazotrophicus (strain ATCC 49037 / DSM 5601 / CCUG 37298 / CIP 103539 / LMG 7603 / PAl5).